The primary structure comprises 342 residues: L-threonine 3-dehydrogenase (342 aa).

Cys38 serves as a coordination point for Zn(2+). Residues Thr40 and His43 each act as charge relay system in the active site. Zn(2+) is bound by residues His63, Glu64, Cys93, Cys96, Cys99, and Cys107. NAD(+) is bound by residues Ile175, Asp195, Arg200, 262-264 (LGL), and 286-287 (IY).

This sequence belongs to the zinc-containing alcohol dehydrogenase family. Homotetramer. Zn(2+) serves as cofactor.

The protein resides in the cytoplasm. The enzyme catalyses L-threonine + NAD(+) = (2S)-2-amino-3-oxobutanoate + NADH + H(+). The protein operates within amino-acid degradation; L-threonine degradation via oxydo-reductase pathway; glycine from L-threonine: step 1/2. Functionally, catalyzes the NAD(+)-dependent oxidation of L-threonine to 2-amino-3-ketobutyrate. The polypeptide is L-threonine 3-dehydrogenase (Streptomyces avermitilis (strain ATCC 31267 / DSM 46492 / JCM 5070 / NBRC 14893 / NCIMB 12804 / NRRL 8165 / MA-4680)).